The sequence spans 1213 residues: tRNA wybutosine-synthesizing protein 4 (1213 aa).

2 stretches are compositionally biased toward low complexity: residues 1–13 (METTEEVVAPATT) and 39–52 (ATTTTTTTDGTTPT). Residues 1 to 76 (METTEEVVAP…DDQVMGTNNS (76 aa)) are disordered. Residues 53 to 67 (HNEHASAKDPRKAQD) are compositionally biased toward basic and acidic residues. Residues Arg117, Gly148, and Asp180 each coordinate S-adenosyl-L-methionine. Positions 215–248 (STPAATTTAAATTTTTTELKTTAATASSTSTEAP) are enriched in low complexity. The disordered stretch occupies residues 215-272 (STPAATTTAAATTTTTTELKTTAATASSTSTEAPQKPKKSPKPKDKSKAARAPAPTTA). Residues 289 to 290 (DL) and Glu318 contribute to the S-adenosyl-L-methionine site. Residues 879–900 (EPRSLPLRNQAPNGAEGNANGS) are disordered. Residues 1006 to 1166 (PTEKPAVLSD…YAAGKDVYGN (161 aa)) enclose the JmjC domain.

It belongs to the methyltransferase superfamily. LCMT family.

The catalysed reaction is 7-[(3S)-3-amino-3-carboxypropyl]wyosine(37) in tRNA(Phe) + S-adenosyl-L-methionine = 7-[(3S)-(3-amino-3-methoxycarbonyl)propyl]wyosine(37) in tRNA(Phe) + S-adenosyl-L-homocysteine. It carries out the reaction 7-[(3S)-(3-amino-3-methoxycarbonyl)propyl]wyosine(37) in tRNA(Phe) + S-adenosyl-L-methionine + CO2 = wybutosine(37) in tRNA(Phe) + S-adenosyl-L-homocysteine + 2 H(+). It participates in tRNA modification; wybutosine-tRNA(Phe) biosynthesis. Functionally, probable S-adenosyl-L-methionine-dependent methyltransferase that acts as a component of the wybutosine biosynthesis pathway. Wybutosine is a hyper modified guanosine with a tricyclic base found at the 3'-position adjacent to the anticodon of eukaryotic phenylalanine tRNA. May methylate the carboxyl group of leucine residues to form alpha-leucine ester residues. The chain is tRNA wybutosine-synthesizing protein 4 (lcm-2) from Neurospora crassa (strain ATCC 24698 / 74-OR23-1A / CBS 708.71 / DSM 1257 / FGSC 987).